Reading from the N-terminus, the 219-residue chain is Cytochrome c oxidase assembly protein CtaG (219 aa).

Polar residues predominate over residues 1–13 (MDATDQGKSTSTT). The segment at 1-24 (MDATDQGKSTSTTAAQAAPGKAAP) is disordered. At 1-29 (MDATDQGKSTSTTAAQAAPGKAAPRRGIG) the chain is on the cytoplasmic side. Low complexity predominate over residues 14–24 (AAQAAPGKAAP). A helical; Signal-anchor for type II membrane protein transmembrane segment spans residues 30 to 52 (RDALVGGICGAVVVLMIGASYAA). The Periplasmic segment spans residues 53–219 (VPFYNWFCRA…GEPDKPRGSL (167 aa)).

It belongs to the COX11/CtaG family.

It is found in the cell inner membrane. Functionally, exerts its effect at some terminal stage of cytochrome c oxidase synthesis, probably by being involved in the insertion of the copper B into subunit I. The protein is Cytochrome c oxidase assembly protein CtaG of Bradyrhizobium sp. (strain ORS 278).